The chain runs to 184 residues: Major fimbrial subunit (184 aa).

The signal sequence occupies residues 1–22 (MKLSKIALAAALVFGINSVATA). Cys-49 and Cys-88 form a disulfide bridge.

This sequence belongs to the fimbrial protein family.

The protein localises to the fimbrium. Its function is as follows. Major structural component of PMF fimbriae. The chain is Major fimbrial subunit (pmfA) from Proteus mirabilis (strain HI4320).